The following is a 77-amino-acid chain: MNLRLCVQALLLLWLSLTAVCGGSLMPLPDGNGLEDGNVRHLVQPRGSRNGPGPWQGGRRKFRRQRPRLSHKGPMPF.

The first 22 residues, 1–22 (MNLRLCVQALLLLWLSLTAVCG), serve as a signal peptide directing secretion. Positions 23 to 41 (GSLMPLPDGNGLEDGNVRH) are excised as a propeptide. The interval 43–77 (VQPRGSRNGPGPWQGGRRKFRRQRPRLSHKGPMPF) is disordered. The span at 58–71 (GRRKFRRQRPRLSH) shows a compositional bias: basic residues.

The protein belongs to the apelin family. Post-translationally, several active peptides may be produced by proteolytic processing of the peptide precursor. As to expression, expressed in the brain with highest levels in the frontal cortex, thalamus, hypothalamus and midbrain. Secreted by the mammary gland into the colostrum and the milk.

It is found in the secreted. The protein resides in the extracellular space. Peptide hormone that functions as endogenous ligand for the G-protein-coupled apelin receptor (APLNR/APJ), that plays a role in cadiovascular homeostasis. Functions as a balanced agonist activating both G(i) protein pathway and beta-arrestin pathway of APLNR. Downstream G proteins activation, apelin can inhibit cAMP production and activate key intracellular effectors such as ERKs. On the other hand, APLNR activation induces beta-arrestin recruitment to the membrane leading to desensitization and internalization of the receptor. Apelin blunts cardiac hypertrophic induction from APLNR on response to pathological stimuli, but also induces myocardial hypertrophy under normal conditions. Apelin-36 dissociates more hardly than (pyroglu)apelin-13 from APLNR. Involved in the regulation of cardiac precursor cell movements during gastrulation and heart morphogenesis. Has an inhibitory effect on cytokine production in response to T-cell receptor/CD3 cross-linking; the oral intake of apelin in the colostrum and the milk might therefore modulate immune responses in neonates. Plays a role in early coronary blood vessels formation. Mediates myocardial contractility in an ERK1/2-dependent manner. May also have a role in the central control of body fluid homeostasis by influencing vasopressin release and drinking behavior. In terms of biological role, (Microbial infection) Endogenous ligand for the apelin receptor (APLNR), an alternative coreceptor with CD4 for HIV-1 infection. Inhibits HIV-1 entry in cells coexpressing CD4 and APLNR. Apelin-36 has a greater inhibitory activity on HIV infection than other synthetic apelin derivatives. The protein is Apelin of Homo sapiens (Human).